The following is a 59-amino-acid chain: MAKTIKVTQTKSSIGRLPKHKATLIGLGLRRIGHTVEREDTPAVRGMVNLVSYMVKVEE.

The protein belongs to the universal ribosomal protein uL30 family. As to quaternary structure, part of the 50S ribosomal subunit.

This Yersinia pseudotuberculosis serotype I (strain IP32953) protein is Large ribosomal subunit protein uL30.